The chain runs to 428 residues: Elongation factor 1-alpha (428 aa).

A tr-type G domain is found at 5–215 (KPHVNIVFIG…ALDQIPEPPK (211 aa)). The segment at 14 to 21 (GHVDHGKS) is G1. 14–21 (GHVDHGKS) contacts GTP. S21 contacts Mg(2+). A G2 region spans residues 68–72 (GITID). The G3 stretch occupies residues 89–92 (DAPG). Residues 89-93 (DAPGH) and 144-147 (NKMD) contribute to the GTP site. The interval 144–147 (NKMD) is G4. The segment at 181–183 (SAW) is G5.

It belongs to the TRAFAC class translation factor GTPase superfamily. Classic translation factor GTPase family. EF-Tu/EF-1A subfamily.

Its subcellular location is the cytoplasm. It carries out the reaction GTP + H2O = GDP + phosphate + H(+). Its function is as follows. GTP hydrolase that promotes the GTP-dependent binding of aminoacyl-tRNA to the A-site of ribosomes during protein biosynthesis. The chain is Elongation factor 1-alpha from Thermococcus gammatolerans (strain DSM 15229 / JCM 11827 / EJ3).